The following is a 493-amino-acid chain: MTTVRTRIAPSPTGDPHVGTAYIALFNYCFAKQHGGEFILRIEDTDQLRSTRESEQQIFDALRWLGIEWNEGPDVGGPHGPYRQSERGDIYAKYAKELVDAGHAFYCFCTAEELEQMRAEQQARGETPRYDGRALLLSAEEVQRRLDAGEPHVIRMKVPSEGICVVPDMLRGDVEIPWDRMDMQVLMKNDGLPTYFLANVVDDHLMGITHVLRGEEWLPSAPKLIKLYEYFGWEQPKLCYMPLLRNPDKSKLSKRKNPTSVTFYERMGFMPEAMLNYLGRMGWSMPDEREKFSLAEMVEHFDLSRISLGGPIFDIEKLSWLNGQWLRELPVEEFATRLQKWAFNSDYMMKIAPHVQGRVETFSQVAPLGGFFFEGALKLDAKLFESKKLSADQVRQVIQLILWKLESLRQWEKERITGCIQAVVEALELKLRDAMPLMFAAITGQASSVSVLDAMEILGPDLTRYRLRQALDLLGGVSKKENKEWEKLLASIA.

The 'HIGH' region motif lies at 10–20 (PSPTGDPHVGT). The 'KMSKS' region signature appears at 251–255 (KLSKR). Residue Lys-254 participates in ATP binding.

This sequence belongs to the class-I aminoacyl-tRNA synthetase family. Glutamate--tRNA ligase type 1 subfamily. As to quaternary structure, monomer.

It localises to the cytoplasm. It carries out the reaction tRNA(Glu) + L-glutamate + ATP = L-glutamyl-tRNA(Glu) + AMP + diphosphate. Catalyzes the attachment of glutamate to tRNA(Glu) in a two-step reaction: glutamate is first activated by ATP to form Glu-AMP and then transferred to the acceptor end of tRNA(Glu). This Pseudomonas putida (strain GB-1) protein is Glutamate--tRNA ligase.